Reading from the N-terminus, the 392-residue chain is uncharacterized protein (392 aa).

The protein belongs to the mimivirus L17x/L18x family.

This is an uncharacterized protein from Acanthamoeba polyphaga (Amoeba).